A 166-amino-acid polypeptide reads, in one-letter code: NADH-quinone oxidoreductase subunit B 1 (166 aa).

Residues cysteine 39, cysteine 40, cysteine 106, and cysteine 135 each coordinate [4Fe-4S] cluster.

Belongs to the complex I 20 kDa subunit family. NDH-1 is composed of 14 different subunits. Subunits NuoB, C, D, E, F, and G constitute the peripheral sector of the complex. [4Fe-4S] cluster serves as cofactor.

It is found in the cell membrane. It carries out the reaction a quinone + NADH + 5 H(+)(in) = a quinol + NAD(+) + 4 H(+)(out). In terms of biological role, NDH-1 shuttles electrons from NADH, via FMN and iron-sulfur (Fe-S) centers, to quinones in the respiratory chain. The immediate electron acceptor for the enzyme in this species is believed to be a menaquinone. Couples the redox reaction to proton translocation (for every two electrons transferred, four hydrogen ions are translocated across the cytoplasmic membrane), and thus conserves the redox energy in a proton gradient. The chain is NADH-quinone oxidoreductase subunit B 1 from Symbiobacterium thermophilum (strain DSM 24528 / JCM 14929 / IAM 14863 / T).